A 143-amino-acid chain; its full sequence is Hemoglobin cathodic subunit alpha (143 aa).

Residue serine 2 is modified to N-acetylserine. In terms of domain architecture, Globin spans 2–143; it reads SLTAKDKSLI…LGAALSDKYR (142 aa). Histidine 60 is an O2 binding site. Residue histidine 89 participates in heme b binding.

Belongs to the globin family. In terms of assembly, heterotetramer of two alpha chains and two beta chains. Red blood cells.

Involved in oxygen transport from gills to the various peripheral tissues. The polypeptide is Hemoglobin cathodic subunit alpha (Anguilla anguilla (European freshwater eel)).